The sequence spans 277 residues: Raffinose operon transcriptional regulatory protein RafR (277 aa).

The HTH araC/xylS-type domain occupies 176 to 274 (NLAVSYLQEN…GASPSYYRKS (99 aa)). 2 consecutive DNA-binding regions (H-T-H motif) follow at residues 193 to 214 (MDLC…KTHA) and 241 to 264 (VQSI…KRYS).

Involved in the regulation of the raffinose-operon. This chain is Raffinose operon transcriptional regulatory protein RafR (rafR), found in Pediococcus pentosaceus.